A 232-amino-acid polypeptide reads, in one-letter code: MIKDERWEKVYSFDDSPYLMEILTELRNKDTDSIAFRKGLVKLGRYMGYEIIKTMDVEKIKIETPLEETEGIIVKDRKNVVIVTVLRAAVPLMEGLVKVFEHARIGIVSASRGKAPKFEIEMNYVKIPQITPEDTVIVADPMIATGSTLITVMEEIKKYGTPKRLIVLGILAAPEGINRIKEKFPEAEIFVTQIDRGLNSKGYILPGLGDAGDRAFGAPIKIPTLPQVHTID.

38 to 42 (KGLVK) lines the GTP pocket. 5-phospho-alpha-D-ribose 1-diphosphate contacts are provided by residues Arg87, Arg112, and 140-148 (DPMIATGST). Residues Ile204 and 209 to 211 (GDA) contribute to the uracil site. Asp210 lines the 5-phospho-alpha-D-ribose 1-diphosphate pocket.

The protein belongs to the UPRTase family. Requires Mg(2+) as cofactor.

It carries out the reaction UMP + diphosphate = 5-phospho-alpha-D-ribose 1-diphosphate + uracil. The protein operates within pyrimidine metabolism; UMP biosynthesis via salvage pathway; UMP from uracil: step 1/1. With respect to regulation, allosterically activated by GTP. Functionally, catalyzes the conversion of uracil and 5-phospho-alpha-D-ribose 1-diphosphate (PRPP) to UMP and diphosphate. This Thermococcus sibiricus (strain DSM 12597 / MM 739) protein is Uracil phosphoribosyltransferase.